A 103-amino-acid chain; its full sequence is High-potential iron-sulfur protein (103 aa).

An N-terminal signal peptide occupies residues 1–28 (MSNRRLFLKSIPIMAAAGAVGMAGLARA). Residues Cys-66, Cys-69, Cys-82, and Cys-96 each contribute to the [4Fe-4S] cluster site.

This sequence belongs to the high-potential iron-sulfur protein (HiPIP) family. In terms of assembly, homodimer.

It is found in the periplasm. Its function is as follows. Specific class of high-redox-potential 4Fe-4S ferredoxins. Functions in anaerobic electron transport in most purple and in some other photosynthetic bacteria and in at least one genus (Paracoccus) of halophilic, denitrifying bacteria. The polypeptide is High-potential iron-sulfur protein (hip) (Ralstonia nicotianae (strain ATCC BAA-1114 / GMI1000) (Ralstonia solanacearum)).